The sequence spans 652 residues: DNA ligase (652 aa).

NAD(+) is bound by residues 29-33 (DSEYD), 78-79 (SL), and Glu107. Residue Lys109 is the N6-AMP-lysine intermediate of the active site. Residues Arg130, Glu164, Lys278, and Lys302 each contribute to the NAD(+) site. 4 residues coordinate Zn(2+): Cys395, Cys398, Cys413, and Cys418. One can recognise a BRCT domain in the interval 577-652 (VADAALSGLT…VRDEAWLESL (76 aa)).

Belongs to the NAD-dependent DNA ligase family. LigA subfamily. It depends on Mg(2+) as a cofactor. Mn(2+) serves as cofactor.

The catalysed reaction is NAD(+) + (deoxyribonucleotide)n-3'-hydroxyl + 5'-phospho-(deoxyribonucleotide)m = (deoxyribonucleotide)n+m + AMP + beta-nicotinamide D-nucleotide.. Functionally, DNA ligase that catalyzes the formation of phosphodiester linkages between 5'-phosphoryl and 3'-hydroxyl groups in double-stranded DNA using NAD as a coenzyme and as the energy source for the reaction. It is essential for DNA replication and repair of damaged DNA. This Streptococcus pneumoniae (strain JJA) protein is DNA ligase.